A 420-amino-acid polypeptide reads, in one-letter code: D-tagatose-1,6-bisphosphate aldolase subunit GatZ (420 aa).

Belongs to the GatZ/KbaZ family. GatZ subfamily. In terms of assembly, forms a complex with GatY.

The protein operates within carbohydrate metabolism; D-tagatose 6-phosphate degradation; D-glyceraldehyde 3-phosphate and glycerone phosphate from D-tagatose 6-phosphate: step 2/2. Its function is as follows. Component of the tagatose-1,6-bisphosphate aldolase GatYZ that is required for full activity and stability of the Y subunit. Could have a chaperone-like function for the proper and stable folding of GatY. When expressed alone, GatZ does not show any aldolase activity. Is involved in the catabolism of galactitol. The protein is D-tagatose-1,6-bisphosphate aldolase subunit GatZ of Escherichia coli O8 (strain IAI1).